Reading from the N-terminus, the 149-residue chain is Flagellar assembly factor FliW (149 aa).

The protein belongs to the FliW family. As to quaternary structure, interacts with translational regulator CsrA and flagellin(s).

It is found in the cytoplasm. Acts as an anti-CsrA protein, binds CsrA and prevents it from repressing translation of its target genes, one of which is flagellin. Binds to flagellin and participates in the assembly of the flagellum. The protein is Flagellar assembly factor FliW of Thermotoga sp. (strain RQ2).